The chain runs to 181 residues: Translation initiation factor IF-3, chloroplastic (181 aa).

This sequence belongs to the IF-3 family. As to quaternary structure, monomer.

The protein localises to the plastid. Its subcellular location is the chloroplast. Its function is as follows. IF-3 binds to the 30S ribosomal subunit and shifts the equilibrium between 70S ribosomes and their 50S and 30S subunits in favor of the free subunits, thus enhancing the availability of 30S subunits on which protein synthesis initiation begins. The sequence is that of Translation initiation factor IF-3, chloroplastic from Gracilaria tenuistipitata var. liui (Red alga).